Reading from the N-terminus, the 123-residue chain is Protein Wnt-7(I) (123 aa).

S1 is lipidated: O-palmitoleoyl serine; by PORCN. The cysteines at positions 89 and 104 are disulfide-linked. The N-linked (GlcNAc...) asparagine glycan is linked to N90. A Microbody targeting signal motif is present at residues 121 to 123; the sequence is CKF.

It belongs to the Wnt family. Palmitoleoylation is required for efficient binding to frizzled receptors. Depalmitoleoylation leads to Wnt signaling pathway inhibition.

Its subcellular location is the secreted. The protein localises to the extracellular space. The protein resides in the extracellular matrix. Functionally, ligand for members of the frizzled family of seven transmembrane receptors. Probable developmental protein. May be a signaling molecule which affects the development of discrete regions of tissues. Is likely to signal over only few cell diameters. This is Protein Wnt-7(I) (WNT-7(I)) from Eptatretus stoutii (Pacific hagfish).